The chain runs to 630 residues: YTH domain-containing family protein 1 (630 aa).

3 disordered regions span residues Asp-38 to Gln-113, Tyr-160 to Tyr-183, and Gln-200 to His-241. Residues Pro-70–Ser-102 show a composition bias toward polar residues. A YTH domain is found at Glu-382–Phe-590.

Belongs to the YTHDF family. YTHDF1 subfamily.

The protein resides in the cytoplasm. It is found in the P-body. Functionally, specifically recognizes and binds N6-methyladenosine (m6A)-containing mRNAs, and regulates their stability. M6A is a modification present at internal sites of mRNAs and some non-coding RNAs and plays a role in mRNA stability and processing. Plays a role in pathogenicity towards plant host. This is YTH domain-containing family protein 1 from Pyricularia oryzae (strain 70-15 / ATCC MYA-4617 / FGSC 8958) (Rice blast fungus).